A 311-amino-acid chain; its full sequence is Ribosomal RNA small subunit methyltransferase H (311 aa).

S-adenosyl-L-methionine is bound by residues 33 to 35 (AGH), D53, F80, D101, and Q108.

It belongs to the methyltransferase superfamily. RsmH family.

The protein localises to the cytoplasm. It catalyses the reaction cytidine(1402) in 16S rRNA + S-adenosyl-L-methionine = N(4)-methylcytidine(1402) in 16S rRNA + S-adenosyl-L-homocysteine + H(+). Functionally, specifically methylates the N4 position of cytidine in position 1402 (C1402) of 16S rRNA. This is Ribosomal RNA small subunit methyltransferase H from Alkaliphilus oremlandii (strain OhILAs) (Clostridium oremlandii (strain OhILAs)).